We begin with the raw amino-acid sequence, 1004 residues long: ABC transporter G family member 25 (1004 aa).

Residues 1–27 (MAASQLLAAAVAAAVFLAALLVPPARC) form the signal peptide. Residues 271–291 (ATALFGGILIVILSVVLLLVY) traverse the membrane as a helical segment. Residues 343-373 (SDQLAASSNEARHATEGNGKRSKNRKKLAHA) form a disordered region. Positions 352–361 (EARHATEGNG) are enriched in basic and acidic residues. A compositionally biased stretch (basic residues) spans 362–372 (KRSKNRKKLAH). Residues 419-659 (VVFKGLTLSI…FSSLGIKVPE (241 aa)) enclose the ABC transporter domain. 451–458 (GPSGAGKT) contributes to the ATP binding site. 6 helical membrane passes run 776 to 796 (ATLQ…IGTI), 804 to 824 (FGVA…QLAA), 886 to 906 (LVFL…AIWF), 907 to 927 (ELGL…LVGT), 943 to 963 (WALE…WLIT), and 978 to 998 (FVLC…IALL).

It belongs to the ABC transporter superfamily. ABCG family. Eye pigment precursor importer (TC 3.A.1.204) subfamily.

Its subcellular location is the membrane. The protein is ABC transporter G family member 25 of Oryza sativa subsp. japonica (Rice).